The chain runs to 785 residues: Mitochondrial intermediate peptidase (785 aa).

The transit peptide at 1–43 (MLTRPAQNALLKSMQPLFRFRGCLLAKSTSTPRRDISTSSRKL) directs the protein to the mitochondrion. His567 contacts Zn(2+). Glu568 is an active-site residue. Zn(2+) contacts are provided by His571 and His574.

It belongs to the peptidase M3 family. It depends on Zn(2+) as a cofactor.

The protein localises to the mitochondrion matrix. It carries out the reaction Release of an N-terminal octapeptide as second stage of processing of some proteins imported into the mitochondrion.. Its function is as follows. Cleaves proteins, imported into the mitochondrion, to their mature size. While most mitochondrial precursor proteins are processed to the mature form in one step by mitochondrial processing peptidase (MPP), the sequential cleavage by MIP of an octapeptide after initial processing by MPP is a required step for a subgroup of nuclear-encoded precursor proteins destined for the matrix or the inner membrane. The chain is Mitochondrial intermediate peptidase (OCT1) from Pleurotus djamor (Pink oyster mushroom).